Here is a 228-residue protein sequence, read N- to C-terminus: Sensory transduction protein RegX3 (228 aa).

The region spanning 3-116 (SVLIVEDEES…ELIARIRAVL (114 aa)) is the Response regulatory domain. D52 is modified (4-aspartylphosphate). The segment at residues 129–228 (DGVLEAGPVR…VRGLGYKLEG (100 aa)) is a DNA-binding region (ompR/PhoB-type).

Post-translationally, phosphorylated by SenX3.

Its function is as follows. Member of the two-component regulatory system SenX3/RegX3 involved in stress response. The system is involved in phosphate starvation response. Once phosphorylated by SenX3, activates the expression of the alkaline phosphatase phoA, the high-affinity phosphate transporter pstSCAB, phnDCE, phnF and senX3. May act as a negative regulator of NhaA. Acts by binding to a DNA motif consisting of an inverted repeat. This Mycolicibacterium smegmatis (strain ATCC 700084 / mc(2)155) (Mycobacterium smegmatis) protein is Sensory transduction protein RegX3.